The sequence spans 78 residues: Large ribosomal subunit protein bL28 (78 aa).

Belongs to the bacterial ribosomal protein bL28 family.

The protein is Large ribosomal subunit protein bL28 of Thiobacillus denitrificans (strain ATCC 25259 / T1).